A 341-amino-acid chain; its full sequence is MKALSKLKAEEGIWMIDVPEPELGHNDVMIKIRKTAICGTDVHIYNWDDWSQKTIPVPMVVGHEYVGEVVAIGQEVKGFKIGDRVSGEGHITCGYCRNCRGGRTHLCRNTIGVGVNRAGCFAQYLVIPAFNAFKIPDNISDELAAIFDPFGNAVHTALSFDLVGEDVLVSGAGPIGIMAAAVCKHVGARHVVITDVNEYRLELARKMGVTRAVNVSQENLTDVMAELGMTEGFDVGLEMSGAPAAFRTLLNTMNHGGRVALLGIPPSDMAIDWNQVIFKGLFIKGIYGREMFETWYKMATLIQSGLDLTPIITHRFSIDDFQKGFDIMRSGQSGKVILNWD.

Cys38 is a Zn(2+) binding site. Active-site charge relay system residues include Thr40 and His43. Zn(2+) is bound by residues His63, Glu64, Cys93, Cys96, Cys99, and Cys107. NAD(+) is bound by residues Ile175, Asp195, Arg200, 262-264 (LGI), and 286-287 (IY).

The protein belongs to the zinc-containing alcohol dehydrogenase family. In terms of assembly, homotetramer. Zn(2+) is required as a cofactor.

The protein resides in the cytoplasm. The enzyme catalyses L-threonine + NAD(+) = (2S)-2-amino-3-oxobutanoate + NADH + H(+). The protein operates within amino-acid degradation; L-threonine degradation via oxydo-reductase pathway; glycine from L-threonine: step 1/2. Its function is as follows. Catalyzes the NAD(+)-dependent oxidation of L-threonine to 2-amino-3-ketobutyrate. This is L-threonine 3-dehydrogenase from Photorhabdus laumondii subsp. laumondii (strain DSM 15139 / CIP 105565 / TT01) (Photorhabdus luminescens subsp. laumondii).